A 58-amino-acid polypeptide reads, in one-letter code: uncharacterized protein (58 aa).

The protein to A.fulgidus AF2407.1.

This is an uncharacterized protein from Pyrococcus abyssi (strain GE5 / Orsay).